Reading from the N-terminus, the 118-residue chain is Small ribosomal subunit protein uS13 (118 aa).

The tract at residues 94 to 118 (GLPLRGQRTKTNARTRKGPRKPIKK) is disordered.

This sequence belongs to the universal ribosomal protein uS13 family. As to quaternary structure, part of the 30S ribosomal subunit. Forms a loose heterodimer with protein S19. Forms two bridges to the 50S subunit in the 70S ribosome.

Its function is as follows. Located at the top of the head of the 30S subunit, it contacts several helices of the 16S rRNA. In the 70S ribosome it contacts the 23S rRNA (bridge B1a) and protein L5 of the 50S subunit (bridge B1b), connecting the 2 subunits; these bridges are implicated in subunit movement. Contacts the tRNAs in the A and P-sites. In Cellvibrio japonicus (strain Ueda107) (Pseudomonas fluorescens subsp. cellulosa), this protein is Small ribosomal subunit protein uS13.